The following is a 212-amino-acid chain: F-box protein GID2 (212 aa).

The tract at residues 1–74 is disordered; it reads MKFRSDSSGG…AGEGEQPRVP (74 aa). Low complexity predominate over residues 35–59; it reads DPSSSSSQGEASSSSQPPPQQQQEE. Residues 70-116 form the F-box domain; that stretch reads QPRVPDLGEDLVFEVLRRAEARTLAAAACVSRGWRQLAEDERLWEAA.

As to quaternary structure, part of some SCF(GID2) complex, which consist of a SKP1 protein, CUL1, GID2 and some RING box protein. Interacts directly with SKP2 and SKP15. Interacts directly with DELLA protein SLR1. May have a higher affinity for phosphorylated SLR1 proteins. In terms of tissue distribution, widely expressed. Preferentially expressed in unopened flowers, shoot apices and elongation stem. Expressed at lower level in the leaf blades, leaf sheaths, roots and rachis.

It localises to the nucleus. Its pathway is protein modification; protein ubiquitination. Its function is as follows. Essential component of some SCF-type E3 ligase complex that positively regulates the gibberellin signaling pathway. Upon gibberellin treatment, the complex mediates the ubiquitination and subsequent degradation of DELLA protein SLR1, a repressor of the gibberellin pathway, leading to activate the pathway. In Oryza sativa subsp. japonica (Rice), this protein is F-box protein GID2 (GID2).